The sequence spans 357 residues: tRNA N6-adenosine threonylcarbamoyltransferase (357 aa).

Positions 120 and 124 each coordinate Fe cation. Residues 143–147, Asp176, Gly189, and Asn289 contribute to the substrate site; that span reads LVSGG. A Fe cation-binding site is contributed by Asp317.

This sequence belongs to the KAE1 / TsaD family. Requires Fe(2+) as cofactor.

The protein localises to the cytoplasm. The enzyme catalyses L-threonylcarbamoyladenylate + adenosine(37) in tRNA = N(6)-L-threonylcarbamoyladenosine(37) in tRNA + AMP + H(+). Functionally, required for the formation of a threonylcarbamoyl group on adenosine at position 37 (t(6)A37) in tRNAs that read codons beginning with adenine. Is involved in the transfer of the threonylcarbamoyl moiety of threonylcarbamoyl-AMP (TC-AMP) to the N6 group of A37, together with TsaE and TsaB. TsaD likely plays a direct catalytic role in this reaction. In Polynucleobacter necessarius subsp. necessarius (strain STIR1), this protein is tRNA N6-adenosine threonylcarbamoyltransferase.